We begin with the raw amino-acid sequence, 301 residues long: Small ribosomal subunit biogenesis GTPase RsgA (301 aa).

The 162-residue stretch at Ile63–Tyr224 folds into the CP-type G domain. Residues Ser112 to Asp115 and Gly167 to Thr175 each bind GTP. The Zn(2+) site is built by Cys248, Cys253, His255, and Cys261.

This sequence belongs to the TRAFAC class YlqF/YawG GTPase family. RsgA subfamily. As to quaternary structure, monomer. Associates with 30S ribosomal subunit, binds 16S rRNA. Requires Zn(2+) as cofactor.

The protein resides in the cytoplasm. One of several proteins that assist in the late maturation steps of the functional core of the 30S ribosomal subunit. Helps release RbfA from mature subunits. May play a role in the assembly of ribosomal proteins into the subunit. Circularly permuted GTPase that catalyzes slow GTP hydrolysis, GTPase activity is stimulated by the 30S ribosomal subunit. This is Small ribosomal subunit biogenesis GTPase RsgA from Leuconostoc citreum (strain KM20).